The chain runs to 274 residues: 4-deoxy-L-threo-5-hexosulose-uronate ketol-isomerase (274 aa).

H192, H194, E199, and H241 together coordinate Zn(2+).

Belongs to the KduI family. Requires Zn(2+) as cofactor.

The enzyme catalyses 5-dehydro-4-deoxy-D-glucuronate = 3-deoxy-D-glycero-2,5-hexodiulosonate. Its pathway is glycan metabolism; pectin degradation; 2-dehydro-3-deoxy-D-gluconate from pectin: step 4/5. Its function is as follows. Catalyzes the isomerization of 5-dehydro-4-deoxy-D-glucuronate to 3-deoxy-D-glycero-2,5-hexodiulosonate. This chain is 4-deoxy-L-threo-5-hexosulose-uronate ketol-isomerase, found in Cereibacter sphaeroides (strain ATCC 17029 / ATH 2.4.9) (Rhodobacter sphaeroides).